The sequence spans 197 residues: Superoxide dismutase [Fe] (197 aa).

The Fe cation site is built by His-26, His-75, Asp-157, and His-161.

The protein belongs to the iron/manganese superoxide dismutase family. Homotetramer. Fe cation serves as cofactor.

It carries out the reaction 2 superoxide + 2 H(+) = H2O2 + O2. Functionally, destroys superoxide anion radicals which are normally produced within the cells and which are toxic to biological systems. The polypeptide is Superoxide dismutase [Fe] (Cupriavidus metallidurans (strain ATCC 43123 / DSM 2839 / NBRC 102507 / CH34) (Ralstonia metallidurans)).